The following is a 666-amino-acid chain: Non-receptor tyrosine-protein kinase TNK1 (666 aa).

Phosphoserine is present on residues Ser-60 and Ser-96. A Protein kinase domain is found at 116 to 377 (VCRGELLGSG…PSFSHLEGLL (262 aa)). ATP contacts are provided by residues 122 to 130 (LGSGCFGVV) and Lys-148. Asp-245 (proton acceptor) is an active-site residue. Ser-255 and Ser-411 each carry phosphoserine. An SH3 domain is found at 380-445 (AGPSEACCVR…PASAVTLADA (66 aa)). Residues 446–493 (GGLPATRPVHRGTPARGDQHPGSIDGDRKKANLWDAPPARGQRRNMPL) form a disordered region. The residue at position 502 (Ser-502) is a Phosphoserine. The disordered stretch occupies residues 506–579 (VLSLGPRPTG…MGMPGARKAA (74 aa)). Position 514 is a phosphothreonine (Thr-514). Position 519 is a phosphoserine (Ser-519). The span at 531–541 (QGPPGLPPRPP) shows a compositional bias: pro residues. A compositionally biased stretch (low complexity) spans 542–552 (LSSSSPQPSQP). Ser-582 bears the Phosphoserine mark.

The protein belongs to the protein kinase superfamily. Tyr protein kinase family. In terms of assembly, interacts with the SH3 domain of PLCG1 via its Pro-rich domain. Post-translationally, autophosphorylated on tyrosine residues. In terms of tissue distribution, expressed in all umbilical cord blood, bone marrow and adult blood cell sub-populations and in several leukemia cell lines. Highly expressed in fetal blood, brain, lung, liver and kidney. Detected at lower levels in adult prostate, testis, ovary, small intestine and colon. Not expressed in adult lung, liver, kidney or brain.

It is found in the cytoplasm. It localises to the membrane. It catalyses the reaction L-tyrosyl-[protein] + ATP = O-phospho-L-tyrosyl-[protein] + ADP + H(+). Involved in negative regulation of cell growth. Has tumor suppressor properties. Plays a negative regulatory role in the Ras-MAPK pathway. May function in signaling pathways utilized broadly during fetal development and more selectively in adult tissues and in cells of the lymphohematopoietic system. Could specifically be involved in phospholipid signal transduction. This Homo sapiens (Human) protein is Non-receptor tyrosine-protein kinase TNK1.